The primary structure comprises 150 residues: Ribonuclease K6 (150 aa).

Positions 1–23 (MVLCFPLLLLLLVLWGQVCPLHA) are cleaved as a signal peptide. His38 serves as the catalytic Proton acceptor. 4 cysteine pairs are disulfide-bonded: Cys46–Cys104, Cys60–Cys114, Cys78–Cys129, and Cys85–Cys92. Residue Asn55 is glycosylated (N-linked (GlcNAc...) asparagine). Substrate-binding positions include 61–65 (KPQNT) and Lys86. Asn100 carries N-linked (GlcNAc...) asparagine glycosylation. Residue Arg105 participates in substrate binding. His145 functions as the Proton donor in the catalytic mechanism.

The protein belongs to the pancreatic ribonuclease family. As to quaternary structure, interacts (via N-terminus) with bacterial lipopolysaccharide (LPS).

The protein resides in the secreted. It localises to the lysosome. Its subcellular location is the cytoplasmic granule. Ribonuclease which shows a preference for the pyrimidines uridine and cytosine. Has potent antibacterial activity against a range of Gram-positive and Gram-negative bacteria, including P.aeruginosa, A.baumanii, M.luteus, S.aureus, E.faecalis, E.faecium, S.saprophyticus and E.coli. Causes loss of bacterial membrane integrity, and also promotes agglutination of Gram-negative bacteria. Probably contributes to urinary tract sterility. Bactericidal activity is independent of RNase activity. This chain is Ribonuclease K6 (RNASE6), found in Saimiri sciureus (Common squirrel monkey).